We begin with the raw amino-acid sequence, 171 residues long: 3-hydroxydecanoyl-[acyl-carrier-protein] dehydratase (171 aa).

His-70 is a catalytic residue.

Belongs to the thioester dehydratase family. FabA subfamily. Homodimer.

It localises to the cytoplasm. It catalyses the reaction a (3R)-hydroxyacyl-[ACP] = a (2E)-enoyl-[ACP] + H2O. It carries out the reaction (3R)-hydroxydecanoyl-[ACP] = (2E)-decenoyl-[ACP] + H2O. The enzyme catalyses (2E)-decenoyl-[ACP] = (3Z)-decenoyl-[ACP]. It participates in lipid metabolism; fatty acid biosynthesis. In terms of biological role, necessary for the introduction of cis unsaturation into fatty acids. Catalyzes the dehydration of (3R)-3-hydroxydecanoyl-ACP to E-(2)-decenoyl-ACP and then its isomerization to Z-(3)-decenoyl-ACP. Can catalyze the dehydratase reaction for beta-hydroxyacyl-ACPs with saturated chain lengths up to 16:0, being most active on intermediate chain length. The protein is 3-hydroxydecanoyl-[acyl-carrier-protein] dehydratase of Shewanella putrefaciens (strain CN-32 / ATCC BAA-453).